The chain runs to 146 residues: 3-dehydroquinate dehydratase (146 aa).

Tyr-23 serves as the catalytic Proton acceptor. Residues Asn-74, His-80, and Asp-87 each contribute to the substrate site. The Proton donor role is filled by His-100. Substrate contacts are provided by residues 101–102 (IS) and Arg-111.

This sequence belongs to the type-II 3-dehydroquinase family. As to quaternary structure, homododecamer.

The enzyme catalyses 3-dehydroquinate = 3-dehydroshikimate + H2O. It functions in the pathway metabolic intermediate biosynthesis; chorismate biosynthesis; chorismate from D-erythrose 4-phosphate and phosphoenolpyruvate: step 3/7. Its function is as follows. Catalyzes a trans-dehydration via an enolate intermediate. The polypeptide is 3-dehydroquinate dehydratase (Bacillus cereus (strain AH820)).